The chain runs to 156 residues: Succinate dehydrogenase assembly factor 2-B, mitochondrial (156 aa).

A mitochondrion-targeting transit peptide spans 1 to 24 (MLRQLIVSTVGRRMPLQMISQSRL).

The protein belongs to the SDHAF2 family. Interacts with the flavoprotein subunit within the SDH catalytic dimer.

It is found in the mitochondrion matrix. In terms of biological role, plays an essential role in the assembly of succinate dehydrogenase (SDH), an enzyme complex (also referred to as respiratory complex II) that is a component of both the tricarboxylic acid (TCA) cycle and the mitochondrial electron transport chain, and which couples the oxidation of succinate to fumarate with the reduction of ubiquinone (coenzyme Q) to ubiquinol. Required for flavinylation (covalent attachment of FAD) of the flavoprotein subunit of the SDH catalytic dimer. This chain is Succinate dehydrogenase assembly factor 2-B, mitochondrial, found in Drosophila erecta (Fruit fly).